We begin with the raw amino-acid sequence, 441 residues long: UBX domain-containing protein 6 (441 aa).

Positions 1–10 are mediates interaction with LMAN1; the sequence is MKKFFQEIKA. 3 disordered regions span residues 12–57, 62–81, and 86–113; these read IKFK…MAAA, RLEQKQPRARGPTSQDSIRN, and ELRAEAAVSGDPEAPGSNTAPEPKEEGS. The segment covering 27–36 has biased composition (basic and acidic residues); the sequence is VGEKAPKEKP. Residues 51-63 form a VCP/p97-interacting motif (VIM) region; the sequence is EAQMAAAAALARL. A PUB domain is found at 175-244; sequence VDTIAKYLDN…GPEEFYVLSE (70 aa). In terms of domain architecture, UBX spans 332–408; that stretch reads RKYTYTLLRV…GLVPSALLTF (77 aa).

As to quaternary structure, interacts with VCP through the PUB domain (via C-terminus) and VIM motif (via N-terminus); the interaction is direct. Forms a ternary complex with CAV1 and VCP. Interacts with SYVN1. Interacts with HERPUD1. Interacts with VCPKMT. May interact with DERL1. Interacts with PLAA, VCP and YOD1; may form a complex involved in macroautophagy. Interacts with LMAN1.

Its subcellular location is the cytoplasm. The protein localises to the cytosol. The protein resides in the membrane. It is found in the nucleus. It localises to the cytoskeleton. Its subcellular location is the microtubule organizing center. The protein localises to the centrosome. The protein resides in the early endosome membrane. It is found in the late endosome membrane. It localises to the lysosome membrane. May negatively regulate the ATPase activity of VCP, an ATP-driven segregase that associates with different cofactors to control a wide variety of cellular processes. As a cofactor of VCP, it may play a role in the transport of CAV1 to lysosomes for degradation. It may also play a role in endoplasmic reticulum-associated degradation (ERAD) of misfolded proteins. Together with VCP and other cofactors, it may play a role in macroautophagy, regulating for instance the clearance of damaged lysosomes. This is UBX domain-containing protein 6 from Bos taurus (Bovine).